Consider the following 193-residue polypeptide: ATP-dependent Clp protease proteolytic subunit (193 aa).

S98 serves as the catalytic Nucleophile. The active site involves H123.

This sequence belongs to the peptidase S14 family. In terms of assembly, fourteen ClpP subunits assemble into 2 heptameric rings which stack back to back to give a disk-like structure with a central cavity, resembling the structure of eukaryotic proteasomes.

It is found in the cytoplasm. It catalyses the reaction Hydrolysis of proteins to small peptides in the presence of ATP and magnesium. alpha-casein is the usual test substrate. In the absence of ATP, only oligopeptides shorter than five residues are hydrolyzed (such as succinyl-Leu-Tyr-|-NHMec, and Leu-Tyr-Leu-|-Tyr-Trp, in which cleavage of the -Tyr-|-Leu- and -Tyr-|-Trp bonds also occurs).. Its function is as follows. Cleaves peptides in various proteins in a process that requires ATP hydrolysis. Has a chymotrypsin-like activity. Plays a major role in the degradation of misfolded proteins. This is ATP-dependent Clp protease proteolytic subunit from Mannheimia succiniciproducens (strain KCTC 0769BP / MBEL55E).